Here is a 437-residue protein sequence, read N- to C-terminus: MTHELSPQLLESFSRDFNADPKNQVISRAARRSGLLEAAYNPAVSQRLNRTFSIELDTDNVTNQQQSGRCWLFSTLNVVRHNFGKANKAKNFTFSQSYNFFWDKIERANYFYDRIIATADRPLTDRTVRGYFDWCQTDGGQWHMAASLIAKYGVVPRYAMPESFNSNHSQALDMVLADKERKDALTLRRLAQADDQEKLEAARTDFLSQIYRIMATALGEPPKTFDLEFRDDDKNYHLDKGLTPVQFYKKYCATDLDDYVVLANAPDHEMNRVLHLGFEDNIKGGYPNLFINVPMEYLEDAAIAQLKDGEAVWFGNAVGRQMDRKTGFMDLDLYQLDQLLDIDSHLSKADRLATGIGESSHDMALVGVDVDGGQVRQWKVENSWGDKSGEKGYFTMSADWFREYTYEVAVQKKHVPAEILDLLKNQPIELDPWDSLI.

Catalysis depends on residues Cys-70, His-361, and Asn-382.

The protein belongs to the peptidase C1 family.

It is found in the cytoplasm. This chain is Aminopeptidase W (pepW), found in Lactobacillus delbrueckii subsp. lactis.